Reading from the N-terminus, the 461-residue chain is Probable ribonuclease FAU-1 (461 aa).

One can recognise an S1 motif domain in the interval 89-158 (GAVFYGEVTE…ARPSLATALR (70 aa)).

The protein belongs to the FAU-1 family.

In terms of biological role, probable RNase involved in rRNA stability through maturation and/or degradation of precursor rRNAs. Binds to RNA in loop regions with AU-rich sequences. The sequence is that of Probable ribonuclease FAU-1 from Natronomonas pharaonis (strain ATCC 35678 / DSM 2160 / CIP 103997 / JCM 8858 / NBRC 14720 / NCIMB 2260 / Gabara) (Halobacterium pharaonis).